A 229-amino-acid chain; its full sequence is Aminodeoxyfutalosine nucleosidase (229 aa).

Glu-13 acts as the Proton acceptor in catalysis. Substrate contacts are provided by residues Gly-79, Ile-153, and 173 to 174; that span reads ME. Residue Asp-197 is the Proton donor of the active site.

The protein belongs to the PNP/UDP phosphorylase family. Homodimer.

The enzyme catalyses 6-amino-6-deoxyfutalosine + H2O = dehypoxanthine futalosine + adenine. The catalysed reaction is S-adenosyl-L-homocysteine + H2O = S-(5-deoxy-D-ribos-5-yl)-L-homocysteine + adenine. It carries out the reaction S-methyl-5'-thioadenosine + H2O = 5-(methylsulfanyl)-D-ribose + adenine. It catalyses the reaction 5'-deoxyadenosine + H2O = 5-deoxy-D-ribose + adenine. Its pathway is quinol/quinone metabolism; menaquinone biosynthesis. It participates in amino-acid biosynthesis; L-methionine biosynthesis via salvage pathway; S-methyl-5-thio-alpha-D-ribose 1-phosphate from S-methyl-5'-thioadenosine (hydrolase route): step 1/2. Its function is as follows. Catalyzes the direct conversion of aminodeoxyfutalosine (AFL) into dehypoxanthine futalosine (DHFL) and adenine via the hydrolysis of the N-glycosidic bond; this reaction seems to represent an essential step in the menaquinone biosynthesis pathway in Campylobacter species. Also catalyzes the hydrolysis of 5'-methylthioadenosine (MTA) to adenine and 5'-methylthioribose. Can also probably use S-adenosylhomocysteine (SAH) as substrate, leading to adenine and S-ribosylhomocysteine. These other activities highlight the tremendous versatility of the enzyme, which also plays key roles in S-adenosylmethionine recycling and in the biosynthesis of the quorum-sensing molecule autoinducer-2. Shows negligible activity with futalosine (FL) as substrate. This chain is Aminodeoxyfutalosine nucleosidase (pfs), found in Campylobacter jejuni subsp. jejuni serotype O:2 (strain ATCC 700819 / NCTC 11168).